The following is a 495-amino-acid chain: Putative lon protease homolog (495 aa).

52–59 contacts ATP; sequence GPPGVGKS. The segment at 471 to 495 is disordered; it reads YSSETTGSQRDSTYNYANMDDRSYE. Residues 472–486 are compositionally biased toward polar residues; the sequence is SSETTGSQRDSTYNY.

This sequence belongs to the peptidase S16 family.

This is Putative lon protease homolog from Thermoplasma volcanium (strain ATCC 51530 / DSM 4299 / JCM 9571 / NBRC 15438 / GSS1).